Here is a 238-residue protein sequence, read N- to C-terminus: Probable transcriptional regulatory protein SGO_0454 (238 aa).

It belongs to the TACO1 family. YeeN subfamily.

It is found in the cytoplasm. The polypeptide is Probable transcriptional regulatory protein SGO_0454 (Streptococcus gordonii (strain Challis / ATCC 35105 / BCRC 15272 / CH1 / DL1 / V288)).